A 339-amino-acid polypeptide reads, in one-letter code: Cathepsin B (339 aa).

The N-terminal stretch at 1-17 (MWWSLILLSCLLALTSA) is a signal peptide. A propeptide spans 18–79 (HDKPSFHPLS…GRVAFGEDID (62 aa)) (activation peptide). 6 disulfide bridges follow: C93/C122, C105/C150, C141/C207, C142/C146, C179/C211, and C187/C198. C108 is an active-site residue. N192 is a glycosylation site (N-linked (GlcNAc...) asparagine). K220 is subject to N6-acetyllysine. Residues H278 and N298 contribute to the active site. The propeptide occupies 334-339 (QYWGRF).

This sequence belongs to the peptidase C1 family. Dimer of a heavy chain and a light chain cross-linked by a disulfide bond. Interacts with SRPX2. Directly interacts with SHKBP1. Expressed in thyroid epithelial cells.

The protein localises to the lysosome. It localises to the melanosome. The protein resides in the secreted. Its subcellular location is the extracellular space. It is found in the apical cell membrane. It carries out the reaction Hydrolysis of proteins with broad specificity for peptide bonds. Preferentially cleaves -Arg-Arg-|-Xaa bonds in small molecule substrates (thus differing from cathepsin L). In addition to being an endopeptidase, shows peptidyl-dipeptidase activity, liberating C-terminal dipeptides.. In terms of biological role, thiol protease which is believed to participate in intracellular degradation and turnover of proteins. Cleaves matrix extracellular phosphoglycoprotein MEPE. Involved in the solubilization of cross-linked TG/thyroglobulin in the thyroid follicle lumen. Has also been implicated in tumor invasion and metastasis. This is Cathepsin B (Ctsb) from Mus musculus (Mouse).